Reading from the N-terminus, the 76-residue chain is U7-lycotoxin-Ls1b (76 aa).

A signal peptide spans 1–22; sequence MKLISFTGLALLLIVSLIDVEA. Residues 23 to 26 constitute a propeptide that is removed on maturation; the sequence is QNEG.

It belongs to the neurotoxin 19 (CSTX) family. 07 (U7-Lctx) subfamily. In terms of processing, contains 4 disulfide bonds. As to expression, expressed by the venom gland.

The protein resides in the secreted. This chain is U7-lycotoxin-Ls1b, found in Lycosa singoriensis (Wolf spider).